Reading from the N-terminus, the 429-residue chain is MAEAYPGGAHAALASRRSSFRNSLRRLRPTEKPDTSFMRGVWKYEIFPSYVRVTNKQVLQLDAQCQELPPCPSVGQILSFKLPSFSFNTTTYGSRYFTVAFLFFGAEDNEVFLKPFFVMHSDQDIVLSVLNPRSLFIEKGKFTWYIVPIRLVKNPYLYLQILPGQSDIQLTRSCTQSGDKLNTSEPQIFLSGSPVTSQDECLPYLLAQHTPPFLKSYARIHTFPGKVCPVNAIRRGKGYVRVSVDTPDLKREGPLNVKVGMTLLDDVIIAFRYNPYPKSHWRWDGESTDIRYFGSPVIIPPNFITELEYNNTYEAPLSSKITAVVVSHSSNPVFYVYPQEWKPGQTLKLTVRNISNNPITIVTGQSMAQAFFIYAGDPSISTIMRRYIQRQGCALTLPGNIVVESSSLPTFERINKTFNGNIVASEGTL.

It belongs to the epstein-barr virus LF2 family. In terms of assembly, interacts with host IRF7; this interaction inhibits IRF7 dimerization, thereby altering its function in immunity. Interacts with BRLF1; this interaction modulates BRLF1 function.

In terms of biological role, prevents the establishment of cellular antiviral state by blocking the cellular IRF7-mediated innate immunity. May also inhibit viral replication by modulating BRLF1 activity. The protein is Protein LF2 (LF2) of Epstein-Barr virus (strain AG876) (HHV-4).